A 142-amino-acid polypeptide reads, in one-letter code: Large ribosomal subunit protein uL13 (142 aa).

Belongs to the universal ribosomal protein uL13 family. In terms of assembly, part of the 50S ribosomal subunit.

Its function is as follows. This protein is one of the early assembly proteins of the 50S ribosomal subunit, although it is not seen to bind rRNA by itself. It is important during the early stages of 50S assembly. In Serratia proteamaculans (strain 568), this protein is Large ribosomal subunit protein uL13.